The sequence spans 341 residues: Anthranilate phosphoribosyltransferase (341 aa).

Residues Gly-80, 83–84 (GD), Thr-88, 90–93 (NIST), 108–116 (KHGNRAVSS), and Ser-120 each bind 5-phospho-alpha-D-ribose 1-diphosphate. Gly-80 contacts anthranilate. Ser-92 provides a ligand contact to Mg(2+). Anthranilate is bound at residue Asn-111. Arg-166 is an anthranilate binding site. Mg(2+)-binding residues include Asp-225 and Glu-226.

Belongs to the anthranilate phosphoribosyltransferase family. As to quaternary structure, homodimer. Requires Mg(2+) as cofactor.

It catalyses the reaction N-(5-phospho-beta-D-ribosyl)anthranilate + diphosphate = 5-phospho-alpha-D-ribose 1-diphosphate + anthranilate. The protein operates within amino-acid biosynthesis; L-tryptophan biosynthesis; L-tryptophan from chorismate: step 2/5. Catalyzes the transfer of the phosphoribosyl group of 5-phosphorylribose-1-pyrophosphate (PRPP) to anthranilate to yield N-(5'-phosphoribosyl)-anthranilate (PRA). The protein is Anthranilate phosphoribosyltransferase of Priestia megaterium (strain ATCC 12872 / QMB1551) (Bacillus megaterium).